Consider the following 61-residue polypeptide: Metallothionein-1A (61 aa).

The residue at position 1 (Met1) is an N-acetylmethionine. Residues 1-29 (MDPNCSCPTGGSCSCAGSCTCKACRCPSC) are beta. Residues Cys5, Cys7, Cys13, Cys15, Cys19, Cys21, Cys24, Cys26, Cys29, Cys33, Cys34, Cys36, Cys37, Cys41, Cys44, Cys48, Cys50, and Cys57 each contribute to the a divalent metal cation site. The interval 30-61 (KKSCCSCCPVGCAKCAQGCVCKGASDKCSCCA) is alpha. Position 58 is a phosphoserine (Ser58). A divalent metal cation is bound by residues Cys59 and Cys60.

Belongs to the metallothionein superfamily. Type 1 family. As to quaternary structure, monomer.

In terms of biological role, metallothioneins have a high content of cysteine residues that bind various heavy metals; these proteins are transcriptionally regulated by both heavy metals and glucocorticoids. In Bos taurus (Bovine), this protein is Metallothionein-1A (MT1A).